The sequence spans 407 residues: Peptidase T (407 aa).

Position 81 (histidine 81) interacts with Zn(2+). Aspartate 83 is an active-site residue. Aspartate 142 is a binding site for Zn(2+). The Proton acceptor role is filled by glutamate 176. Zn(2+) is bound by residues glutamate 177, aspartate 199, and histidine 381.

The protein belongs to the peptidase M20B family. Zn(2+) is required as a cofactor.

Its subcellular location is the cytoplasm. It catalyses the reaction Release of the N-terminal residue from a tripeptide.. Cleaves the N-terminal amino acid of tripeptides. The sequence is that of Peptidase T from Streptococcus pneumoniae (strain Taiwan19F-14).